Here is a 505-residue protein sequence, read N- to C-terminus: AAA-ATPase At5g17760 (505 aa).

Residues 11–27 form a helical membrane-spanning segment; sequence TSVFTAYASMAGYMMMI. The disordered stretch occupies residues 136–155; sequence GGGGGVGGRGGGGGRRGGMD. The segment covering 137 to 151 has biased composition (gly residues); sequence GGGGVGGRGGGGGRR. 260 to 267 serves as a coordination point for ATP; the sequence is GPPGTGKS.

Belongs to the AAA ATPase family. BCS1 subfamily. Mg(2+) is required as a cofactor.

The protein resides in the membrane. The catalysed reaction is ATP + H2O = ADP + phosphate + H(+). This chain is AAA-ATPase At5g17760, found in Arabidopsis thaliana (Mouse-ear cress).